The primary structure comprises 258 residues: MSKISEVFKNSKALITYVTAGDPNLEVTKEIILELNKDGVDIIEVGIPFSDPLADGPIIQKASQKALKNGVTLKKIFETLNEIKEEVTCPLVLMGYYNSILNYGIDNFITEAVNTGISGVIIPDLPFDEEEEFYAKIKENGIDPILLVAPNTSEERLKEISKVCSGFLYCVSIMGVTGDSQAPMEHLKEYSQRVRKYVNIPLAIGFGIDSPTKAKNIIEYFDGIIVGSALIKIIDENSDDKGKLLKEIKRFTKSLKVW.

Active-site proton acceptor residues include Glu-44 and Asp-55.

The protein belongs to the TrpA family. As to quaternary structure, tetramer of two alpha and two beta chains.

It carries out the reaction (1S,2R)-1-C-(indol-3-yl)glycerol 3-phosphate + L-serine = D-glyceraldehyde 3-phosphate + L-tryptophan + H2O. It functions in the pathway amino-acid biosynthesis; L-tryptophan biosynthesis; L-tryptophan from chorismate: step 5/5. Functionally, the alpha subunit is responsible for the aldol cleavage of indoleglycerol phosphate to indole and glyceraldehyde 3-phosphate. The chain is Tryptophan synthase alpha chain from Petrotoga mobilis (strain DSM 10674 / SJ95).